A 123-amino-acid polypeptide reads, in one-letter code: Large ribosomal subunit protein bL19 (123 aa).

It belongs to the bacterial ribosomal protein bL19 family.

Its function is as follows. This protein is located at the 30S-50S ribosomal subunit interface and may play a role in the structure and function of the aminoacyl-tRNA binding site. In Bdellovibrio bacteriovorus (strain ATCC 15356 / DSM 50701 / NCIMB 9529 / HD100), this protein is Large ribosomal subunit protein bL19.